A 534-amino-acid chain; its full sequence is Glucans biosynthesis protein D (534 aa).

Residues 1–26 (MQRRDFIRNASLALAAFGLPSLPACA) constitute a signal peptide (tat-type signal).

Belongs to the OpgD/OpgG family. In terms of processing, predicted to be exported by the Tat system. The position of the signal peptide cleavage has not been experimentally proven.

The protein localises to the periplasm. The protein operates within glycan metabolism; osmoregulated periplasmic glucan (OPG) biosynthesis. In terms of biological role, probably involved in the control of the structural glucose backbone of osmoregulated periplasmic glucans (OPGs). This chain is Glucans biosynthesis protein D, found in Stenotrophomonas maltophilia (strain K279a).